Here is a 179-residue protein sequence, read N- to C-terminus: Adaptation to cold protein A (179 aa).

Residues Lys133–Arg179 form a disordered region. Acidic residues predominate over residues Asp144 to Arg179.

Part of an operon involved in cold adaptation. This is Adaptation to cold protein A from Shewanella oneidensis (strain ATCC 700550 / JCM 31522 / CIP 106686 / LMG 19005 / NCIMB 14063 / MR-1).